Consider the following 373-residue polypeptide: Probable dual-specificity RNA methyltransferase RlmN (373 aa).

Glu-111 (proton acceptor) is an active-site residue. A Radical SAM core domain is found at 117–356; it reads GPGRLTACLS…LRKSYGTSIH (240 aa). Cysteines 124 and 359 form a disulfide. Residues Cys-131, Cys-135, and Cys-138 each coordinate [4Fe-4S] cluster. S-adenosyl-L-methionine-binding positions include 183 to 184, Ser-216, 239 to 241, and Asn-316; these read GE and SLH. Cys-359 (S-methylcysteine intermediate) is an active-site residue.

It belongs to the radical SAM superfamily. RlmN family. [4Fe-4S] cluster serves as cofactor.

The protein localises to the cytoplasm. It catalyses the reaction adenosine(2503) in 23S rRNA + 2 reduced [2Fe-2S]-[ferredoxin] + 2 S-adenosyl-L-methionine = 2-methyladenosine(2503) in 23S rRNA + 5'-deoxyadenosine + L-methionine + 2 oxidized [2Fe-2S]-[ferredoxin] + S-adenosyl-L-homocysteine. The enzyme catalyses adenosine(37) in tRNA + 2 reduced [2Fe-2S]-[ferredoxin] + 2 S-adenosyl-L-methionine = 2-methyladenosine(37) in tRNA + 5'-deoxyadenosine + L-methionine + 2 oxidized [2Fe-2S]-[ferredoxin] + S-adenosyl-L-homocysteine. In terms of biological role, specifically methylates position 2 of adenine 2503 in 23S rRNA and position 2 of adenine 37 in tRNAs. The chain is Probable dual-specificity RNA methyltransferase RlmN from Chlorobium phaeovibrioides (strain DSM 265 / 1930) (Prosthecochloris vibrioformis (strain DSM 265)).